The chain runs to 506 residues: Glycerol kinase (506 aa).

T14 is a binding site for ADP. ATP contacts are provided by T14, T15, and S16. Residue T14 coordinates sn-glycerol 3-phosphate. Position 18 (R18) interacts with ADP. The sn-glycerol 3-phosphate site is built by R84, E85, and Y136. 3 residues coordinate glycerol: R84, E85, and Y136. A Phosphohistidine; by HPr modification is found at H232. D246 serves as a coordination point for sn-glycerol 3-phosphate. Glycerol-binding residues include D246 and Q247. ADP-binding residues include T268 and G311. Residues T268, G311, Q315, and G412 each contribute to the ATP site. Residues G412 and N416 each contribute to the ADP site.

The protein belongs to the FGGY kinase family. In terms of assembly, homotetramer and homodimer (in equilibrium). Post-translationally, the phosphoenolpyruvate-dependent sugar phosphotransferase system (PTS), including enzyme I, and histidine-containing protein (HPr) are required for the phosphorylation of His-232, which leads to the activation of the enzyme.

The enzyme catalyses glycerol + ATP = sn-glycerol 3-phosphate + ADP + H(+). It functions in the pathway polyol metabolism; glycerol degradation via glycerol kinase pathway; sn-glycerol 3-phosphate from glycerol: step 1/1. With respect to regulation, activated by phosphorylation and inhibited by fructose 1,6-bisphosphate (FBP). In terms of biological role, key enzyme in the regulation of glycerol uptake and metabolism. Catalyzes the phosphorylation of glycerol to yield sn-glycerol 3-phosphate. This is Glycerol kinase from Enterococcus casseliflavus (Enterococcus flavescens).